The following is a 359-amino-acid chain: Serum paraoxonase/arylesterase 1 (359 aa).

C42 and C353 are oxidised to a cystine. The N-linked (GlcNAc...) asparagine glycan is linked to N50. Residues E53 and D54 each coordinate Ca(2+). Residue H115 is the Proton acceptor of the active site. Positions 117, 168, 169, and 224 each coordinate Ca(2+). N253 is a glycosylation site (N-linked (GlcNAc...) asparagine). Ca(2+) is bound by residues D269 and N270. N270 and N324 each carry an N-linked (GlcNAc...) asparagine glycan.

This sequence belongs to the paraoxonase family. In terms of assembly, homodimer. Interacts with CLU. Ca(2+) is required as a cofactor. In terms of processing, glycosylated. Post-translationally, the signal sequence is not cleaved. In terms of tissue distribution, plasma. Associated with HDL.

Its subcellular location is the secreted. The protein resides in the extracellular space. The catalysed reaction is a phenyl acetate + H2O = a phenol + acetate + H(+). It carries out the reaction An aryl dialkyl phosphate + H2O = dialkyl phosphate + an aryl alcohol.. The enzyme catalyses an N-acyl-L-homoserine lactone + H2O = an N-acyl-L-homoserine + H(+). Its function is as follows. Hydrolyzes the toxic metabolites of a variety of organophosphorus insecticides. Capable of hydrolyzing a broad spectrum of organophosphate substrates and lactones, and a number of aromatic carboxylic acid esters. Mediates an enzymatic protection of low density lipoproteins against oxidative modification. This is Serum paraoxonase/arylesterase 1 (PON1) from Oryctolagus cuniculus (Rabbit).